The primary structure comprises 354 residues: uncharacterized protein (354 aa).

It belongs to the band 7/mec-2 family.

The protein localises to the mitochondrion. This is an uncharacterized protein from Schizosaccharomyces pombe (strain 972 / ATCC 24843) (Fission yeast).